The following is a 207-amino-acid chain: Metalloproteinase inhibitor 1 (207 aa).

The N-terminal stretch at 1–23 is a signal peptide; the sequence is MAPLAALASSMLLLLWLVAPSRA. Residue C24 participates in Zn(2+) binding. The involved in metalloproteinase-binding stretch occupies residues 24-27; it reads CTCV. Cystine bridges form between C24–C93, C26–C122, C36–C147, C150–C197, C155–C160, and C168–C189. The NTR domain maps to 24–147; that stretch reads CTCVPPHPQT…GFTKTYAAGC (124 aa). Residue N53 is glycosylated (N-linked (GlcNAc...) asparagine). An involved in metalloproteinase-binding region spans residues 90 to 91; sequence ES. N-linked (GlcNAc...) asparagine glycosylation occurs at N101. S178 carries the post-translational modification Phosphoserine.

The protein belongs to the protease inhibitor I35 (TIMP) family. As to quaternary structure, interacts with MMP1, MMP3, MMP10 and MMP13, but has only very low affinity for MMP14. Interacts with CD63; identified in a complex with CD63 and ITGB1. In terms of processing, the activity of TIMP1 is dependent on the presence of disulfide bonds. N-glycosylated.

Its subcellular location is the secreted. Metalloproteinase inhibitor that functions by forming one to one complexes with target metalloproteinases, such as collagenases, and irreversibly inactivates them by binding to their catalytic zinc cofactor. Acts on MMP1, MMP2, MMP3, MMP7, MMP8, MMP9, MMP10, MMP11, MMP12, MMP13 and MMP16. Does not act on MMP14. Also functions as a growth factor that regulates cell differentiation, migration and cell death and activates cellular signaling cascades via CD63 and ITGB1. Plays a role in integrin signaling. This Oryctolagus cuniculus (Rabbit) protein is Metalloproteinase inhibitor 1 (TIMP1).